Reading from the N-terminus, the 147-residue chain is MSSKVTRKIYFCGSIRGGREDAALYKRIIDQLQSYGEVLTEHVGDLEAQEEELGETCDDYYIHERDINWLFSSDAVVAEVTQPSLGVGYELGRALEHKKNVLCLYRPQPGKRLSAMIKGAENGKNFFVKEYKEEDVPDLLMNFFTSL.

Residues 10-16 (YFCGSIR), Tyr25, His42, Glu90, and 114-116 (SAM) each bind substrate.

Belongs to the 2'-deoxynucleoside 5'-phosphate N-hydrolase 1 family. In terms of assembly, monomer and homodimer.

It is found in the cytoplasm. The protein resides in the nucleus. The enzyme catalyses a pyrimidine 2'-deoxyribonucleoside 5'-phosphate + H2O = a pyrimidine nucleobase + 2-deoxy-D-ribose 5-phosphate. The catalysed reaction is a purine 2'-deoxyribonucleoside 5'-phosphate + H2O = a purine nucleobase + 2-deoxy-D-ribose 5-phosphate. Functionally, catalyzes the cleavage of the N-glycosidic bond of deoxyribonucleoside 5'-monophosphates to yield deoxyribose 5-phosphate and a purine or pyrimidine base. In Nematostella vectensis (Starlet sea anemone), this protein is Putative 2'-deoxynucleoside 5'-phosphate N-hydrolase 1.